The following is a 295-amino-acid chain: Bifunctional protein FolD (295 aa).

NADP(+) is bound by residues Gly-166–Ser-168, Ser-195, and Ile-236.

This sequence belongs to the tetrahydrofolate dehydrogenase/cyclohydrolase family. As to quaternary structure, homodimer.

It catalyses the reaction (6R)-5,10-methylene-5,6,7,8-tetrahydrofolate + NADP(+) = (6R)-5,10-methenyltetrahydrofolate + NADPH. It carries out the reaction (6R)-5,10-methenyltetrahydrofolate + H2O = (6R)-10-formyltetrahydrofolate + H(+). Its pathway is one-carbon metabolism; tetrahydrofolate interconversion. Its function is as follows. Catalyzes the oxidation of 5,10-methylenetetrahydrofolate to 5,10-methenyltetrahydrofolate and then the hydrolysis of 5,10-methenyltetrahydrofolate to 10-formyltetrahydrofolate. This Prosthecochloris aestuarii (strain DSM 271 / SK 413) protein is Bifunctional protein FolD.